The sequence spans 347 residues: N-acetyl-gamma-glutamyl-phosphate reductase (347 aa).

Cys153 is a catalytic residue.

The protein belongs to the NAGSA dehydrogenase family. Type 1 subfamily.

The protein resides in the cytoplasm. It carries out the reaction N-acetyl-L-glutamate 5-semialdehyde + phosphate + NADP(+) = N-acetyl-L-glutamyl 5-phosphate + NADPH + H(+). The protein operates within amino-acid biosynthesis; L-arginine biosynthesis; N(2)-acetyl-L-ornithine from L-glutamate: step 3/4. Functionally, catalyzes the NADPH-dependent reduction of N-acetyl-5-glutamyl phosphate to yield N-acetyl-L-glutamate 5-semialdehyde. This Mycobacterium leprae (strain Br4923) protein is N-acetyl-gamma-glutamyl-phosphate reductase.